The chain runs to 232 residues: Orotidine 5'-phosphate decarboxylase (232 aa).

Residues Asp13, Lys35, 62–71 (DLKFHDIPNT), Thr122, Arg182, Gln191, Gly211, and Arg212 contribute to the substrate site. Catalysis depends on Lys64, which acts as the Proton donor.

The protein belongs to the OMP decarboxylase family. Type 1 subfamily. In terms of assembly, homodimer.

It catalyses the reaction orotidine 5'-phosphate + H(+) = UMP + CO2. It participates in pyrimidine metabolism; UMP biosynthesis via de novo pathway; UMP from orotate: step 2/2. Functionally, catalyzes the decarboxylation of orotidine 5'-monophosphate (OMP) to uridine 5'-monophosphate (UMP). The protein is Orotidine 5'-phosphate decarboxylase of Pseudomonas aeruginosa (strain LESB58).